The sequence spans 314 residues: Glutamyl-Q tRNA(Asp) synthetase (314 aa).

Residues 14–18 (RFAPS) and glutamate 50 contribute to the L-glutamate site. Residues 17 to 27 (PSPTGPLHVGS) carry the 'HIGH' region motif. Zn(2+) contacts are provided by cysteine 106, cysteine 108, tyrosine 129, and cysteine 133. Tyrosine 187 and arginine 205 together coordinate L-glutamate. The 'KMSKS' region signature appears at 243–247 (KLSKR). Lysine 246 lines the ATP pocket.

It belongs to the class-I aminoacyl-tRNA synthetase family. GluQ subfamily. Zn(2+) is required as a cofactor.

Its function is as follows. Catalyzes the tRNA-independent activation of glutamate in presence of ATP and the subsequent transfer of glutamate onto a tRNA(Asp). Glutamate is transferred on the 2-amino-5-(4,5-dihydroxy-2-cyclopenten-1-yl) moiety of the queuosine in the wobble position of the QUC anticodon. This is Glutamyl-Q tRNA(Asp) synthetase from Geobacter sulfurreducens (strain ATCC 51573 / DSM 12127 / PCA).